We begin with the raw amino-acid sequence, 368 residues long: Agmatine deiminase (368 aa).

C357 (amidino-cysteine intermediate) is an active-site residue.

This sequence belongs to the agmatine deiminase family. As to quaternary structure, homodimer.

The catalysed reaction is agmatine + H2O = N-carbamoylputrescine + NH4(+). Its pathway is amine and polyamine biosynthesis; putrescine biosynthesis via agmatine pathway; N-carbamoylputrescine from agmatine: step 1/1. In terms of biological role, mediates the hydrolysis of agmatine into N-carbamoylputrescine in the arginine decarboxylase (ADC) pathway of putrescine biosynthesis, a basic polyamine. This is Agmatine deiminase from Ectopseudomonas mendocina (strain ymp) (Pseudomonas mendocina).